A 298-amino-acid chain; its full sequence is Glutamyl-Q tRNA(Asp) synthetase (298 aa).

Residues 8-12 (RFAPS) and Glu-44 contribute to the L-glutamate site. The 'HIGH' region signature appears at 11–21 (PSPTGPLHFGS). Positions 100, 102, 123, and 127 each coordinate Zn(2+). L-glutamate is bound by residues Tyr-183 and Arg-201. The 'KMSKS' region motif lies at 239-243 (KLSKQ). Lys-242 serves as a coordination point for ATP.

The protein belongs to the class-I aminoacyl-tRNA synthetase family. GluQ subfamily. The cofactor is Zn(2+).

Catalyzes the tRNA-independent activation of glutamate in presence of ATP and the subsequent transfer of glutamate onto a tRNA(Asp). Glutamate is transferred on the 2-amino-5-(4,5-dihydroxy-2-cyclopenten-1-yl) moiety of the queuosine in the wobble position of the QUC anticodon. This Burkholderia orbicola (strain MC0-3) protein is Glutamyl-Q tRNA(Asp) synthetase.